Consider the following 595-residue polypeptide: Elongation factor 4 (595 aa).

The tr-type G domain occupies 2 to 183 (KNIRNFCIIA…TIVEKVPAPK (182 aa)). Residues 14–19 (DHGKST) and 130–133 (NKID) contribute to the GTP site.

It belongs to the TRAFAC class translation factor GTPase superfamily. Classic translation factor GTPase family. LepA subfamily.

Its subcellular location is the cell inner membrane. The catalysed reaction is GTP + H2O = GDP + phosphate + H(+). Its function is as follows. Required for accurate and efficient protein synthesis under certain stress conditions. May act as a fidelity factor of the translation reaction, by catalyzing a one-codon backward translocation of tRNAs on improperly translocated ribosomes. Back-translocation proceeds from a post-translocation (POST) complex to a pre-translocation (PRE) complex, thus giving elongation factor G a second chance to translocate the tRNAs correctly. Binds to ribosomes in a GTP-dependent manner. This is Elongation factor 4 from Parabacteroides distasonis (strain ATCC 8503 / DSM 20701 / CIP 104284 / JCM 5825 / NCTC 11152).